A 479-amino-acid polypeptide reads, in one-letter code: Muscarinic acetylcholine receptor M4 (479 aa).

Topologically, residues 1–30 (MANFTPVNGSSANQSVRLVTTAHNHLETVE) are extracellular. N-linked (GlcNAc...) asparagine glycosylation is found at N8 and N13. A helical membrane pass occupies residues 31-53 (MVFIATVTGSLSLVTVVGNILVM). Over 54–67 (LSIKVNRQLQTVNN) the chain is Cytoplasmic. Residues 68-88 (YFLFSLACADLIIGAFSMNLY) traverse the membrane as a helical segment. At 89–105 (TLYIIKGYWPLGAVVCD) the chain is on the extracellular side. An intrachain disulfide couples C104 to C184. A helical membrane pass occupies residues 106–127 (LWLALDYVVSNASVMNLLIISF). At 128–147 (DRYFCVTKPLTYPARRTTKM) the chain is on the cytoplasmic side. Residues 148-170 (AGLMIAAAWVLSFVLWAPAILFW) form a helical membrane-spanning segment. Topologically, residues 171–192 (QFVVGKRTVPDNQCFIQFLSNP) are extracellular. A helical membrane pass occupies residues 193–215 (AVTFGTAIAAFYLPVVIMTVLYI). Topologically, residues 216–401 (HISLASRSRV…AARERKVTRT (186 aa)) are cytoplasmic. Positions 271–334 (LEEAPPPALP…APTLQPRTLN (64 aa)) are disordered. A compositionally biased stretch (pro residues) spans 274-285 (APPPALPPPPRP). The segment covering 293–303 (NESSSGSATQN) has biased composition (polar residues). Residues 310 to 333 (TELSTTEAATTPALPAPTLQPRTL) show a composition bias toward low complexity. The helical transmembrane segment at 402 to 422 (IFAILLAFILTWTPYNVMVLV) threads the bilayer. Over 423–436 (NTFCQSCIPERVWS) the chain is Extracellular. The helical transmembrane segment at 437–456 (IGYWLCYVNSTINPACYALC) threads the bilayer. The Cytoplasmic segment spans residues 457 to 479 (NATFKKTFRHLLLCQYRNIGTAR). 3 positions are modified to phosphothreonine: T459, T463, and T477.

This sequence belongs to the G-protein coupled receptor 1 family. Muscarinic acetylcholine receptor subfamily. CHRM4 sub-subfamily.

The protein resides in the cell membrane. Its subcellular location is the postsynaptic cell membrane. The muscarinic acetylcholine receptor mediates various cellular responses, including inhibition of adenylate cyclase, breakdown of phosphoinositides and modulation of potassium channels through the action of G proteins. Primary transducing effect is inhibition of adenylate cyclase. This is Muscarinic acetylcholine receptor M4 (Chrm4) from Mus musculus (Mouse).